The primary structure comprises 285 residues: MRHTLPLAPQFYVTAPQPCPYIDGRMERKLFTALQGEFAETLNDSLSKQGFRRSQNVLYRPSCADCTACLSARIDVSAFTPSRSQRRTLKRNAVMEREATSPWATEDQYSLFRKYLDARHAEGGMADMDIFEFAAMIEETPVRSRVVEYRQSAEAAPNRKRAPRNLAGVCLTDVLDDGLSMVYSFYDPDLVRQSLGTFMVLDHVEIAREAGLPYVYLGYWVPGSPKMGYKASFSGLEIYKNGEWQPIGDPESHSRDTHPLNVDPIAEQVAKINLPDTLPTDRRKG.

The protein belongs to the R-transferase family. Bpt subfamily.

It localises to the cytoplasm. It catalyses the reaction N-terminal L-glutamyl-[protein] + L-leucyl-tRNA(Leu) = N-terminal L-leucyl-L-glutamyl-[protein] + tRNA(Leu) + H(+). The catalysed reaction is N-terminal L-aspartyl-[protein] + L-leucyl-tRNA(Leu) = N-terminal L-leucyl-L-aspartyl-[protein] + tRNA(Leu) + H(+). Its function is as follows. Functions in the N-end rule pathway of protein degradation where it conjugates Leu from its aminoacyl-tRNA to the N-termini of proteins containing an N-terminal aspartate or glutamate. In Dinoroseobacter shibae (strain DSM 16493 / NCIMB 14021 / DFL 12), this protein is Aspartate/glutamate leucyltransferase.